Consider the following 342-residue polypeptide: Tetraacyldisaccharide 4'-kinase (342 aa).

68 to 75 (TVGGTGKT) is a binding site for ATP.

This sequence belongs to the LpxK family.

The enzyme catalyses a lipid A disaccharide + ATP = a lipid IVA + ADP + H(+). The protein operates within glycolipid biosynthesis; lipid IV(A) biosynthesis; lipid IV(A) from (3R)-3-hydroxytetradecanoyl-[acyl-carrier-protein] and UDP-N-acetyl-alpha-D-glucosamine: step 6/6. Functionally, transfers the gamma-phosphate of ATP to the 4'-position of a tetraacyldisaccharide 1-phosphate intermediate (termed DS-1-P) to form tetraacyldisaccharide 1,4'-bis-phosphate (lipid IVA). The sequence is that of Tetraacyldisaccharide 4'-kinase from Burkholderia vietnamiensis (strain G4 / LMG 22486) (Burkholderia cepacia (strain R1808)).